The sequence spans 120 residues: Chaperonin GroEL (120 aa).

Residue 23–27 coordinates ATP; it reads DGTTT.

Belongs to the chaperonin (HSP60) family. In terms of assembly, forms a cylinder of 14 subunits composed of two heptameric rings stacked back-to-back. Interacts with the co-chaperonin GroES.

It localises to the cytoplasm. The catalysed reaction is ATP + H2O + a folded polypeptide = ADP + phosphate + an unfolded polypeptide.. Its function is as follows. Together with its co-chaperonin GroES, plays an essential role in assisting protein folding. The GroEL-GroES system forms a nano-cage that allows encapsulation of the non-native substrate proteins and provides a physical environment optimized to promote and accelerate protein folding. The polypeptide is Chaperonin GroEL (Mycolicibacterium fallax (Mycobacterium fallax)).